A 1069-amino-acid chain; its full sequence is Rab GTPase-activating protein 1 (1069 aa).

Residues 1 to 79 (MDDKASVGKI…DPPMDDQPGE (79 aa)) form a disordered region. The span at 7–22 (VGKISVSSDSVSTLNS) shows a compositional bias: low complexity. At serine 42 the chain carries Phosphoserine. Residues 142-298 (EDSVVFSKLT…IFTFSVSLEI (157 aa)) enclose the PID domain. Serine 360 bears the Phosphoserine mark. The disordered stretch occupies residues 482-527 (ERERRKTTASPSVRLPQSGSQSSVIPSPPEDDEEEDNDEPLLSGSG). Polar residues predominate over residues 489-506 (TASPSVRLPQSGSQSSVI). A compositionally biased stretch (acidic residues) spans 510–520 (PEDDEEEDNDE). Residues 566–752 (GVPEALRGEV…HIIDLLLCEG (187 aa)) form the Rab-GAP TBC domain. Residues 798–1047 (KKLMELACNM…ALNEVQAAKK (250 aa)) adopt a coiled-coil conformation. Phosphothreonine is present on threonine 996.

In terms of assembly, interacts with RAB6A and tubulin gamma.

It is found in the cytoplasm. The protein resides in the cytosol. Its subcellular location is the cytoskeleton. It localises to the microtubule organizing center. The protein localises to the centrosome. May act as a GTPase-activating protein of RAB6A. May play a role in microtubule nucleation by centrosome. May participate in a RAB6A-mediated pathway involved in the metaphase-anaphase transition. The polypeptide is Rab GTPase-activating protein 1 (RABGAP1) (Homo sapiens (Human)).